We begin with the raw amino-acid sequence, 182 residues long: Ribosome-recycling factor (182 aa).

The protein belongs to the RRF family.

Its subcellular location is the cytoplasm. Its function is as follows. Responsible for the release of ribosomes from messenger RNA at the termination of protein biosynthesis. May increase the efficiency of translation by recycling ribosomes from one round of translation to another. The chain is Ribosome-recycling factor from Hydrogenobaculum sp. (strain Y04AAS1).